The sequence spans 216 residues: ATP phosphoribosyltransferase (216 aa).

The protein belongs to the ATP phosphoribosyltransferase family. Short subfamily. As to quaternary structure, heteromultimer composed of HisG and HisZ subunits.

The protein localises to the cytoplasm. It carries out the reaction 1-(5-phospho-beta-D-ribosyl)-ATP + diphosphate = 5-phospho-alpha-D-ribose 1-diphosphate + ATP. It participates in amino-acid biosynthesis; L-histidine biosynthesis; L-histidine from 5-phospho-alpha-D-ribose 1-diphosphate: step 1/9. Its function is as follows. Catalyzes the condensation of ATP and 5-phosphoribose 1-diphosphate to form N'-(5'-phosphoribosyl)-ATP (PR-ATP). Has a crucial role in the pathway because the rate of histidine biosynthesis seems to be controlled primarily by regulation of HisG enzymatic activity. This is ATP phosphoribosyltransferase from Lachnospira eligens (strain ATCC 27750 / DSM 3376 / VPI C15-48 / C15-B4) (Eubacterium eligens).